The chain runs to 522 residues: Transactivator/viroplasmin protein (522 aa).

Residues 488 to 522 (DASADEGTTDKSGPPPTRSIVEKEDVPNTSSKQVD) form a disordered region.

Belongs to the caulimoviridae viroplasmin family.

The protein localises to the host cytoplasm. In terms of biological role, enhances the ribosomal termination-reinitiation event leading to the translation of major open reading frames on the polycistronic viral RNAs. The polypeptide is Transactivator/viroplasmin protein (Cauliflower mosaic virus (strain D/H) (CaMV)).